The sequence spans 225 residues: MNSIEFTLLARRTQNSVISTTSNDLSNWSRLSSLWPLLYGTSCCFIEFASLIGSRFDFDRYGLVPRSSPRQADLILTAGTVTMKMAPSLVRLYEQMPEPKYVIAMGACTITGGMFSTDSYSTVRGVDKLIPVDVYLPGCPPKPEAIIDAITKLRKKISREIYEDRIRSQEENRCFTTNHKFHVGPSMHTGNYDPGLLYQLPSTSEIASETFFKYKSSVSAHELVN.

[4Fe-4S] cluster is bound by residues cysteine 43, cysteine 44, cysteine 108, and cysteine 139.

It belongs to the complex I 20 kDa subunit family. As to quaternary structure, NDH is composed of at least 16 different subunits, 5 of which are encoded in the nucleus. Requires [4Fe-4S] cluster as cofactor.

The protein resides in the plastid. It is found in the chloroplast thylakoid membrane. The enzyme catalyses a plastoquinone + NADH + (n+1) H(+)(in) = a plastoquinol + NAD(+) + n H(+)(out). It carries out the reaction a plastoquinone + NADPH + (n+1) H(+)(in) = a plastoquinol + NADP(+) + n H(+)(out). Its function is as follows. NDH shuttles electrons from NAD(P)H:plastoquinone, via FMN and iron-sulfur (Fe-S) centers, to quinones in the photosynthetic chain and possibly in a chloroplast respiratory chain. The immediate electron acceptor for the enzyme in this species is believed to be plastoquinone. Couples the redox reaction to proton translocation, and thus conserves the redox energy in a proton gradient. The sequence is that of NAD(P)H-quinone oxidoreductase subunit K, chloroplastic from Oenothera argillicola (Appalachian evening primrose).